The chain runs to 114 residues: Large ribosomal subunit protein bL19 (114 aa).

This sequence belongs to the bacterial ribosomal protein bL19 family.

This protein is located at the 30S-50S ribosomal subunit interface and may play a role in the structure and function of the aminoacyl-tRNA binding site. The sequence is that of Large ribosomal subunit protein bL19 from Clavibacter sepedonicus (Clavibacter michiganensis subsp. sepedonicus).